The following is a 1252-amino-acid chain: DNA-directed RNA polymerase subunit beta (1252 aa).

The protein belongs to the RNA polymerase beta chain family. In terms of assembly, the RNAP catalytic core consists of 2 alpha, 1 beta, 1 beta' and 1 omega subunit. When a sigma factor is associated with the core the holoenzyme is formed, which can initiate transcription.

It catalyses the reaction RNA(n) + a ribonucleoside 5'-triphosphate = RNA(n+1) + diphosphate. Functionally, DNA-dependent RNA polymerase catalyzes the transcription of DNA into RNA using the four ribonucleoside triphosphates as substrates. In Chlamydia abortus (strain DSM 27085 / S26/3) (Chlamydophila abortus), this protein is DNA-directed RNA polymerase subunit beta.